Reading from the N-terminus, the 272-residue chain is 3-methyl-2-oxobutanoate hydroxymethyltransferase (272 aa).

Aspartate 54 and aspartate 93 together coordinate Mg(2+). 3-methyl-2-oxobutanoate-binding positions include 54-55 (DS), aspartate 93, and lysine 121. Position 123 (glutamate 123) interacts with Mg(2+). Catalysis depends on glutamate 190, which acts as the Proton acceptor.

Belongs to the PanB family. Homodecamer; pentamer of dimers. The cofactor is Mg(2+).

The protein localises to the cytoplasm. It catalyses the reaction 3-methyl-2-oxobutanoate + (6R)-5,10-methylene-5,6,7,8-tetrahydrofolate + H2O = 2-dehydropantoate + (6S)-5,6,7,8-tetrahydrofolate. Its pathway is cofactor biosynthesis; (R)-pantothenate biosynthesis; (R)-pantoate from 3-methyl-2-oxobutanoate: step 1/2. Its function is as follows. Catalyzes the reversible reaction in which hydroxymethyl group from 5,10-methylenetetrahydrofolate is transferred onto alpha-ketoisovalerate to form ketopantoate. The protein is 3-methyl-2-oxobutanoate hydroxymethyltransferase of Janthinobacterium sp. (strain Marseille) (Minibacterium massiliensis).